The primary structure comprises 288 residues: Formamidopyrimidine-DNA glycosylase (288 aa).

Residue Pro-2 is the Schiff-base intermediate with DNA of the active site. Glu-3 (proton donor) is an active-site residue. Lys-58 serves as the catalytic Proton donor; for beta-elimination activity. Positions 101, 124, and 169 each coordinate DNA. The FPG-type zinc-finger motif lies at 254-288 (LVYDRAGLPCRVCGTPIRQIVQGQRSTFYCPACQR). The active-site Proton donor; for delta-elimination activity is Arg-278.

It belongs to the FPG family. As to quaternary structure, monomer. The cofactor is Zn(2+).

It catalyses the reaction Hydrolysis of DNA containing ring-opened 7-methylguanine residues, releasing 2,6-diamino-4-hydroxy-5-(N-methyl)formamidopyrimidine.. The enzyme catalyses 2'-deoxyribonucleotide-(2'-deoxyribose 5'-phosphate)-2'-deoxyribonucleotide-DNA = a 3'-end 2'-deoxyribonucleotide-(2,3-dehydro-2,3-deoxyribose 5'-phosphate)-DNA + a 5'-end 5'-phospho-2'-deoxyribonucleoside-DNA + H(+). Functionally, involved in base excision repair of DNA damaged by oxidation or by mutagenic agents. Acts as a DNA glycosylase that recognizes and removes damaged bases. Has a preference for oxidized purines, such as 7,8-dihydro-8-oxoguanine (8-oxoG). Has AP (apurinic/apyrimidinic) lyase activity and introduces nicks in the DNA strand. Cleaves the DNA backbone by beta-delta elimination to generate a single-strand break at the site of the removed base with both 3'- and 5'-phosphates. This chain is Formamidopyrimidine-DNA glycosylase, found in Ralstonia nicotianae (strain ATCC BAA-1114 / GMI1000) (Ralstonia solanacearum).